The sequence spans 503 residues: Carboxyl-terminal PDZ ligand of neuronal nitric oxide synthase protein (503 aa).

Residues Phe26–Gly191 form the PID domain. The tract at residues His170–Asp212 is disordered. 4 positions are modified to phosphoserine: Ser183, Ser187, Ser190, and Ser262. The segment at Leu266–Ser285 is disordered. The stretch at Ala319–Leu360 forms a coiled coil. Residues Ser368, Ser371, Ser398, and Ser414 each carry the phosphoserine modification. Residues Gln491–Val503 form an interaction with NOS1 region. The short motif at Ile501 to Val503 is the PDZ-binding element.

In terms of assembly, interacts with the PDZ domain of NOS1 or the second PDZ domain of DLG4 through its C-terminus. Interacts with RASD1 and SYN1, SYN2 and SYN3 via its PID domain. Forms a ternary complex with NOS1 and RASD1. Forms a ternary complex with NOS1 and SYN1. In terms of tissue distribution, mainly expressed in brain. Highly expressed in accessory olfactory bulb, caudate-putamen, cerebellum, cerebral cortex, dentate gyrus of the hippocampus, islands of Calleja, olfactory bulb and supraoptic nucleus. Expressed in kidney glomeruli podocytes (at protein level).

It is found in the cell projection. The protein resides in the filopodium. The protein localises to the podosome. In terms of biological role, adapter protein involved in neuronal nitric-oxide (NO) synthesis regulation via its association with nNOS/NOS1. The complex formed with NOS1 and synapsins is necessary for specific NO and synapsin functions at a presynaptic level. Mediates an indirect interaction between NOS1 and RASD1 leading to enhance the ability of NOS1 to activate RASD1. Competes with DLG4 for interaction with NOS1, possibly affecting NOS1 activity by regulating the interaction between NOS1 and DLG4. In kidney podocytes, plays a role in podosomes and filopodia formation through CDC42 activation. This Rattus norvegicus (Rat) protein is Carboxyl-terminal PDZ ligand of neuronal nitric oxide synthase protein.